Consider the following 132-residue polypeptide: Transcription antitermination protein NusB (132 aa).

Belongs to the NusB family.

Involved in transcription antitermination. Required for transcription of ribosomal RNA (rRNA) genes. Binds specifically to the boxA antiterminator sequence of the ribosomal RNA (rrn) operons. The protein is Transcription antitermination protein NusB of Sulfurimonas denitrificans (strain ATCC 33889 / DSM 1251) (Thiomicrospira denitrificans (strain ATCC 33889 / DSM 1251)).